The chain runs to 76 residues: Defensin-like protein 164 (76 aa).

The N-terminal stretch at 1–25 is a signal peptide; the sequence is MAKLLCSYLFICMFVLSGFLVFSSA. 4 disulfides stabilise this stretch: C31–C76, C41–C61, C46–C70, and C50–C72.

It belongs to the DEFL family.

It is found in the secreted. The polypeptide is Defensin-like protein 164 (LCR38) (Arabidopsis thaliana (Mouse-ear cress)).